Consider the following 980-residue polypeptide: Conserved oligomeric Golgi complex subunit 1 (980 aa).

Ala2 carries the N-acetylalanine modification. Phosphoserine is present on Ser7. Lys598 bears the N6-acetyllysine mark. The segment covering 923 to 934 (RATSRSVETQAQ) has biased composition (polar residues). Residues 923–950 (RATSRSVETQAQVGPPALSRVGDPTTHP) form a disordered region.

The protein belongs to the COG1 family. As to quaternary structure, component of the conserved oligomeric Golgi complex which is composed of eight different subunits and is required for normal Golgi morphology and localization.

The protein localises to the golgi apparatus membrane. In terms of biological role, required for normal Golgi function. This is Conserved oligomeric Golgi complex subunit 1 (Cog1) from Mus musculus (Mouse).